The following is a 324-amino-acid chain: Sperm acrosome membrane-associated protein 6 (324 aa).

The N-terminal stretch at 1 to 26 (MALLALASAVPSALLALAVFRVPAWA) is a signal peptide. A CXXC motif motif is present at residues 27 to 30 (CLLC). 6 disulfides stabilise this stretch: C27–C139, C30–C142, C41–C55, C124–C147, C128–C153, and C170–C226. Topologically, residues 27-295 (CLLCFTTYSE…RPEALTPSNL (269 aa)) are extracellular. The CXXC motif motif lies at 139-142 (CSGC). The region spanning 150–236 (PLDCPVQDVT…VIKQDQRPLA (87 aa)) is the Ig-like domain. N-linked (GlcNAc...) asparagine glycosylation occurs at N243. A helical transmembrane segment spans residues 296 to 316 (FLLAVLGALASASATVLAWMF). Topologically, residues 317 to 324 (FRWYCSGN) are cytoplasmic.

This sequence belongs to the SPACA6 family. In terms of assembly, forms a complex with IZUMO1 and TMEM81 on spermatocyte cell membrane required for fertilization. As to expression, detected at the sperm head, equatorial region, neck and midpiece (at protein level). Expressed in testis.

It localises to the cytoplasmic vesicle. It is found in the secretory vesicle. The protein localises to the acrosome membrane. Its function is as follows. Sperm protein required for fusion of sperm with the egg membrane during fertilization. May regulate the expression of sperm surface protein DCST2. The chain is Sperm acrosome membrane-associated protein 6 from Homo sapiens (Human).